The following is a 358-amino-acid chain: G-protein coupled receptor 20 (358 aa).

The Extracellular portion of the chain corresponds to 1–48; the sequence is MPSVSPAGPSAGAVPNATAVTTVRTNASGLEVPLFHLFARLDEELHGT. Asparagine 16 and asparagine 26 each carry an N-linked (GlcNAc...) asparagine glycan. The helical transmembrane segment at 49–69 threads the bilayer; the sequence is FPGLWLALMAVHGAIFLAGLV. At 70-86 the chain is on the cytoplasmic side; that stretch reads LNGLALYVFCCRTRAKT. Residues 87 to 107 traverse the membrane as a helical segment; sequence PSVIYTINLVVTDLLVGLSLP. Topologically, residues 108–125 are extracellular; the sequence is TRFAVYYGARGCLRCAFP. Residues 126 to 146 form a helical membrane-spanning segment; sequence HVLGYFLNMHCSILFLTCICV. Residues 147 to 168 are Cytoplasmic-facing; it reads DRYLAIVRPEGSRRCRQPACAR. Residues 169-189 traverse the membrane as a helical segment; that stretch reads AVCAFVWLAAGAVTLSVLGVT. The Extracellular segment spans residues 190–196; that stretch reads GSRPCCR. Residues 197 to 217 form a helical membrane-spanning segment; sequence VFALTVLEFLLPLLVISVFTG. The Cytoplasmic portion of the chain corresponds to 218–238; the sequence is RIMCALSRPGLLHQGRQRRVR. A helical membrane pass occupies residues 239–259; it reads AMQLLLTVLIIFLVCFTPFHA. Over 260–275 the chain is Extracellular; that stretch reads RQVAVALWPDMPHHTS. The chain crosses the membrane as a helical span at residues 276–296; it reads LVVYHVAVTLSSLNSCMDPIV. The Cytoplasmic segment spans residues 297–358; it reads YCFVTSGFQA…TQALANGPEA (62 aa). Positions 315 to 339 are disordered; sequence HGEREPSSGDVVSMHRSSKGSGRHH. The segment covering 330 to 339 has biased composition (basic residues); it reads RSSKGSGRHH.

Belongs to the G-protein coupled receptor 1 family. As to expression, ubiquitous with highest levels in intestinal tissues. In the brain detected in thalamus, putamen, and caudate, but not in frontal cortex, pons and hypothalamus.

The protein localises to the cell membrane. Functionally, orphan receptor with constitutive G(i) signaling activity that activate cyclic AMP. The protein is G-protein coupled receptor 20 (GPR20) of Homo sapiens (Human).